The following is a 345-amino-acid chain: Protein sdf-9 (345 aa).

Residues 33 to 284 (NRNRVVKIVP…SFIYEAVLDY (252 aa)) enclose the Tyrosine-protein phosphatase domain.

Belongs to the protein-tyrosine phosphatase family. In terms of tissue distribution, expressed in the 2 embryonic head hypodermal cells XXXL/R.

Its subcellular location is the cytoplasm. The protein localises to the cell membrane. Together with eak-4 and phosphatase eak-6, negatively regulates dauer larva formation downstream of insulin-like receptor daf-2 and in parallel of age-1, pdk-1 and akt-1. In Caenorhabditis elegans, this protein is Protein sdf-9.